The primary structure comprises 201 residues: Lipopolysaccharide core heptose(II)-phosphate phosphatase (201 aa).

An N-terminal signal peptide occupies residues methionine 1–serine 35.

Belongs to the phosphoglycerate mutase family. Ais subfamily.

It is found in the periplasm. Its pathway is bacterial outer membrane biogenesis; lipopolysaccharide metabolism. In terms of biological role, catalyzes the dephosphorylation of heptose(II) of the outer membrane lipopolysaccharide core. In Salmonella arizonae (strain ATCC BAA-731 / CDC346-86 / RSK2980), this protein is Lipopolysaccharide core heptose(II)-phosphate phosphatase.